We begin with the raw amino-acid sequence, 218 residues long: Adenylate kinase (218 aa).

10–15 (GAGKGT) lines the ATP pocket. An NMP region spans residues 30–59 (STGDMLRAAVKAGTPLGQQAKAVMDAGKLV). AMP-binding positions include Thr-31, Arg-36, 57 to 59 (KLV), 85 to 88 (GFPR), and Gln-92. The interval 122–159 (GRRSHPASGRTYHVKFNPPKVEGKDDVTGEDLIQREDD) is LID. ATP-binding positions include Arg-123 and 132–133 (TY). A disordered region spans residues 127-147 (PASGRTYHVKFNPPKVEGKDD). Residues Arg-156 and Arg-167 each coordinate AMP. Position 203 (Gly-203) interacts with ATP.

It belongs to the adenylate kinase family. Monomer.

It is found in the cytoplasm. The enzyme catalyses AMP + ATP = 2 ADP. The protein operates within purine metabolism; AMP biosynthesis via salvage pathway; AMP from ADP: step 1/1. Catalyzes the reversible transfer of the terminal phosphate group between ATP and AMP. Plays an important role in cellular energy homeostasis and in adenine nucleotide metabolism. The polypeptide is Adenylate kinase (Paracidovorax citrulli (strain AAC00-1) (Acidovorax citrulli)).